The sequence spans 545 residues: Chaperonin GroEL (545 aa).

Residues 30–33 (TLGP), Lys51, 87–91 (DGTTT), Gly415, 479–481 (NAA), and Asp495 contribute to the ATP site.

It belongs to the chaperonin (HSP60) family. As to quaternary structure, forms a cylinder of 14 subunits composed of two heptameric rings stacked back-to-back. Interacts with the co-chaperonin GroES.

The protein resides in the cytoplasm. The enzyme catalyses ATP + H2O + a folded polypeptide = ADP + phosphate + an unfolded polypeptide.. Its function is as follows. Together with its co-chaperonin GroES, plays an essential role in assisting protein folding. The GroEL-GroES system forms a nano-cage that allows encapsulation of the non-native substrate proteins and provides a physical environment optimized to promote and accelerate protein folding. In Tolumonas auensis (strain DSM 9187 / NBRC 110442 / TA 4), this protein is Chaperonin GroEL.